The chain runs to 88 residues: Long neurotoxin LNTX-2 (88 aa).

A signal peptide spans 1–21 (MKTLLLTLVVVTIVCLDFGYA). 4 disulfides stabilise this stretch: C24/C42, C35/C63, C67/C78, and C79/C84.

It belongs to the three-finger toxin family. Long-chain subfamily. Type II alpha-neurotoxin sub-subfamily. As to expression, expressed by the venom gland.

Its subcellular location is the secreted. Its function is as follows. Binds with high affinity to muscular nicotinic acetylcholine receptors (nAChRs), whereas it binds with a low affinity to neuronal alpha-7/CHRNA7 nAChRs. The chain is Long neurotoxin LNTX-2 from Demansia vestigiata (Lesser black whip snake).